Here is a 368-residue protein sequence, read N- to C-terminus: Ferredoxin--NADP reductase 2 (368 aa).

Residues Asp-57, Gln-65, Tyr-70, Val-110, Phe-145, Asp-310, and Thr-351 each contribute to the FAD site.

This sequence belongs to the ferredoxin--NADP reductase type 2 family. Homodimer. FAD serves as cofactor.

It carries out the reaction 2 reduced [2Fe-2S]-[ferredoxin] + NADP(+) + H(+) = 2 oxidized [2Fe-2S]-[ferredoxin] + NADPH. This Cupriavidus pinatubonensis (strain JMP 134 / LMG 1197) (Cupriavidus necator (strain JMP 134)) protein is Ferredoxin--NADP reductase 2.